Here is an 891-residue protein sequence, read N- to C-terminus: MTDRLASLRAISASAKSMMSIAAARGAQPTAPIQTAPVHFDPLPTPYLDGIRARLTEVKLPPKALKSALNSYDQACARWRYSLDESFSQAARSVSPHNLHLLSTLRFRLYTEQVERWAVQVLQVAEQWRAEMEKQRAHIAASTDKSKKPRPKFHSEYTPLLELYFRFNAYPTYADRRVLAEKTGMLTRQITVWFQNHRRRAKGPLPRMTPTAKIPLEEFERERENLARKLLPMLLPPHLRPITLGNNKTPDLTTSSRARALPPAKEDKPPQVTRKTSKKVPKTAHPAPSTLVAPSQDTVMADAISTKKTKKAKSKQCADIEMKDSSKPKRRKMKKLPKGVVGTADVAMCIDPPQVPKKNKVKPKKSMAFDSQAELAFAQAAYPSPSKYAWVHTRKPQTDAPKAKASSVTSDVARLGKGRPGKPSPPASSTVPSRRVSTRLNAMRPPYAFPARYDSAAVPMTFAVAQVTKFTFATDSASFGFKPRISTRRPNITSDAMSQLVSSFERLRLLSVELSVSRNPPLPAFEHQRLVDLRVEGLTSGEVTALHFTPGAYAARLAVTYIPPRAPLPSTVLDLPRALRARLVHPMVLPETVTQPDAFAPFIALAERRARRKARKEKKRQEEKQAKKDKKERKKAGLPHRAPSTVDAPDVSSRASSLDSDVSTSARKSSKKSKRQPSSSSRASSVASSGRTPSLSSTSSRRSSGMSMPSTPGPEQSLPIVAASDFALGGEEDVSMDADLMAQLFGSDENADAVGYDLPMHPEPFTADMITFTSCADGALGDMTADVNMPNLGQSSIDDMNWTASVGSNAQDPASQESGGDEASHWLDISFDRPTTTSQINVLGGTYSCELGGSDNMNAPLDFSDLTFGLDTGADYFSGFNNTIGGTTIMV.

Residues Ser-146–Leu-205 constitute a DNA-binding region (homeobox). Disordered stretches follow at residues Pro-241–Leu-291, Asp-319–Gly-339, Thr-393–Ser-437, Ala-610–Leu-718, and Met-800–Glu-822. Residues Leu-244–Arg-257 show a composition bias toward polar residues. Residues Pro-328–Pro-337 show a composition bias toward basic residues. Over residues Ala-427 to Ser-437 the composition is skewed to low complexity. The span at Lys-627–Leu-638 shows a compositional bias: basic residues. Composition is skewed to low complexity over residues Val-651–Arg-667 and Gln-676–Ser-710. Residues Met-800–Ser-818 show a composition bias toward polar residues.

The protein resides in the nucleus. Functionally, specifies A-alpha-1 mating-type. May regulate the expression of genes specific to the homokaryotic cell type. The polypeptide is Mating-type protein A-alpha Y1 (Schizophyllum commune (Split gill fungus)).